The sequence spans 229 residues: Large ribosomal subunit protein uL1 (229 aa).

Belongs to the universal ribosomal protein uL1 family. Part of the 50S ribosomal subunit.

In terms of biological role, binds directly to 23S rRNA. The L1 stalk is quite mobile in the ribosome, and is involved in E site tRNA release. Functionally, protein L1 is also a translational repressor protein, it controls the translation of the L11 operon by binding to its mRNA. The polypeptide is Large ribosomal subunit protein uL1 (Clostridium kluyveri (strain ATCC 8527 / DSM 555 / NBRC 12016 / NCIMB 10680 / K1)).